The chain runs to 92 residues: Acylphosphatase (92 aa).

Residues 4 to 92 (AVQLDVFGRV…SACHKFSVVG (89 aa)) form the Acylphosphatase-like domain. Catalysis depends on residues arginine 19 and asparagine 37.

It belongs to the acylphosphatase family.

It carries out the reaction an acyl phosphate + H2O = a carboxylate + phosphate + H(+). The chain is Acylphosphatase (acyP) from Latilactobacillus sakei subsp. sakei (strain 23K) (Lactobacillus sakei subsp. sakei).